The sequence spans 275 residues: Anthracycline biosynthesis protein DnrV (275 aa).

VOC domains lie at 8-136 (APAW…VWRK) and 150-263 (SVGW…VVEL).

It functions in the pathway antibiotic biosynthesis; daunorubicin biosynthesis. Its pathway is antibiotic biosynthesis; carminomycin biosynthesis. Involved in the biosynthesis of the anthracyclines carminomycin and daunorubicin (daunomycin) which are aromatic polyketide antibiotics that exhibit high cytotoxicity and are widely applied in the chemotherapy of a variety of cancers. In vivo, it acts jointly with DoxA in the conversion of 13-deoxycarminomycin and 13-deoxydaunorubicin to yield carminomycin and daunorubicin, respectively. In vitro, it also acts jointly with DoxA in the C-14 hydroxylation of daunorubicin to form doxorubicin, although this strain is not a doxorubicin producer. This Streptomyces peucetius protein is Anthracycline biosynthesis protein DnrV (dnrV).